Here is a 161-residue protein sequence, read N- to C-terminus: Cyclic pyranopterin monophosphate synthase (161 aa).

Substrate-binding positions include 75 to 77 (LCH) and 113 to 114 (ME). Asp128 is a catalytic residue.

Belongs to the MoaC family. In terms of assembly, homohexamer; trimer of dimers.

It carries out the reaction (8S)-3',8-cyclo-7,8-dihydroguanosine 5'-triphosphate = cyclic pyranopterin phosphate + diphosphate. It participates in cofactor biosynthesis; molybdopterin biosynthesis. Catalyzes the conversion of (8S)-3',8-cyclo-7,8-dihydroguanosine 5'-triphosphate to cyclic pyranopterin monophosphate (cPMP). The protein is Cyclic pyranopterin monophosphate synthase of Cronobacter sakazakii (strain ATCC BAA-894) (Enterobacter sakazakii).